We begin with the raw amino-acid sequence, 356 residues long: Phosphoribosyl pyrophosphate synthase-associated protein 1 (356 aa).

Methionine 1 is modified (N-acetylmethionine). Phosphoserine is present on residues serine 177 and serine 215.

It belongs to the ribose-phosphate pyrophosphokinase family. As to quaternary structure, binds to PRPS1 and PRPS2. Ubiquitous.

Its function is as follows. Seems to play a negative regulatory role in 5-phosphoribose 1-diphosphate synthesis. The sequence is that of Phosphoribosyl pyrophosphate synthase-associated protein 1 (Prpsap1) from Rattus norvegicus (Rat).